The sequence spans 622 residues: Probable ATP-dependent RNA helicase DDX41 (622 aa).

The span at 1 to 15 (MEDSEPERKRARADE) shows a compositional bias: basic and acidic residues. 2 disordered regions span residues 1–39 (MEDSEPERKRARADEATAGGSRSEDEDEDDEDYVPYVPL) and 51–84 (LQRRRKGATEEEQQDSGSEPRGDEDDIPLGPQSN). Ser-4 is modified (phosphoserine). Lys-9 carries the N6-acetyllysine modification. A Glycyl lysine isopeptide (Lys-Gly) (interchain with G-Cter in ubiquitin) cross-link involves residue Lys-9. Phosphoserine occurs at positions 21 and 23. Positions 24-33 (EDEDEDDEDY) are enriched in acidic residues. Phosphotyrosine is present on Tyr-33. Lys-115 is covalently cross-linked (Glycyl lysine isopeptide (Lys-Gly) (interchain with G-Cter in ubiquitin)). Residues 181-209 (KSFKEMKFPAAILRGLKKKGILHPTPIQI) carry the Q motif motif. One can recognise a Helicase ATP-binding domain in the interval 212 to 396 (IPTILSGRDM…KSALVKPVTI (185 aa)). Position 225–232 (225–232 (AFTGSGKT)) interacts with ATP. Residues 344-347 (DEAD) carry the DEAD box motif. A Helicase C-terminal domain is found at 407-567 (DVIQEVEYVK…KVPPVLQVLH (161 aa)). Tyr-414 bears the Phosphotyrosine mark. Glycyl lysine isopeptide (Lys-Gly) (interchain with G-Cter in SUMO2) cross-links involve residues Lys-416 and Lys-442. Residues 580–597 (RGCAFCGGLGHRITDCPK) form a CCHC-type zinc finger.

It belongs to the DEAD box helicase family. DDX41 subfamily. In terms of assembly, identified in the spliceosome C complex. Interacts with ERCC6. Interacts with FAM50A. Interacts with STING1. Interacts with CGAS. Interacts with several spliceosomes components such as PRP19 or CDC5L. Post-translationally, acetylation at Lys-9 regulates the nuclear/cytoplasmic localization. Phosphorylated by BTK; phosphorylation induces binding to dsDNA and STING1. In terms of processing, 'Lys-48'-linked ubiquitinated and degraded by TRIM21 leading to negative regulation of the innate immune response to intracellular dsDNA.

The protein resides in the nucleus. Its subcellular location is the cytoplasm. The catalysed reaction is ATP + H2O = ADP + phosphate + H(+). Functionally, multifunctional protein that participates in many aspects of cellular RNA metabolism. Plays pivotal roles in innate immune sensing and hematopoietic homeostasis. Recognizes foreign or self-nucleic acids generated during microbial infection, thereby initiating anti-pathogen responses. Mechanistically, phosphorylation by BTK allows binding to dsDNA leading to interaction with STING1. Modulates the homeostasis of dsDNA through its ATP-dependent DNA-unwinding activity and ATP-independent strand-annealing activity. In turn, induces STING1-mediated type I interferon and cytokine responses to DNA and DNA viruses. During murine leukemia virus infection, primarily senses the DNA/RNA hybrid generated at the first step of reverse transcription, while cGAS recognizes dsDNA generated at the next step and both are needed for the antiretroviral innate immune response. Selectively modulates the transcription of certain immunity-associated genes by regulating their alternative splicing. Binds to RNA (R)-loops, structures consisting of DNA/RNA hybrids and a displaced strand of DNA that occur during transcription, and prevents their accumulation, thereby maintaining genome stability. Also participates in pre-mRNA splicing, translational regulation and snoRNA processing, which is essential for ribosome biogenesis. The chain is Probable ATP-dependent RNA helicase DDX41 (Ddx41) from Mus musculus (Mouse).